Here is a 123-residue protein sequence, read N- to C-terminus: MADLQKIVDDLSSLTVLEAAELAKLLEEKWGVSAAAAVAVAAAPGAAAAAVEEKTEFTVVLASAGDKKIEVIKEVRAITGLGLKEAKDLVEGAPKPIKEGVNKDEAEKLKAQLEKAGAKVELK.

Belongs to the bacterial ribosomal protein bL12 family. Homodimer. Part of the ribosomal stalk of the 50S ribosomal subunit. Forms a multimeric L10(L12)X complex, where L10 forms an elongated spine to which 2 to 4 L12 dimers bind in a sequential fashion. Binds GTP-bound translation factors.

Its function is as follows. Forms part of the ribosomal stalk which helps the ribosome interact with GTP-bound translation factors. Is thus essential for accurate translation. This Rhodopseudomonas palustris (strain BisB5) protein is Large ribosomal subunit protein bL12.